A 29-amino-acid chain; its full sequence is Cytochrome b6-f complex subunit 8 (29 aa).

The helical transmembrane segment at 3–23 threads the bilayer; the sequence is IVSLAWAALMVVFTFSLSLVV.

It belongs to the PetN family. As to quaternary structure, the 4 large subunits of the cytochrome b6-f complex are cytochrome b6, subunit IV (17 kDa polypeptide, PetD), cytochrome f and the Rieske protein, while the 4 small subunits are PetG, PetL, PetM and PetN. The complex functions as a dimer.

Its subcellular location is the plastid. It is found in the chloroplast thylakoid membrane. In terms of biological role, component of the cytochrome b6-f complex, which mediates electron transfer between photosystem II (PSII) and photosystem I (PSI), cyclic electron flow around PSI, and state transitions. The chain is Cytochrome b6-f complex subunit 8 from Solanum bulbocastanum (Wild potato).